Consider the following 418-residue polypeptide: Actin-related protein 3 (418 aa).

An N-acetylalanine modification is found at A2.

It belongs to the actin family. ARP3 subfamily. In terms of assembly, component of the Arp2/3 complex composed of ACTR2/ARP2, ACTR3/ARP3, ARPC1B/p41-ARC, ARPC2/p34-ARC, ARPC3/p21-ARC, ARPC4/p20-ARC and ARPC5/p16-ARC. Detected in fibroblasts.

It localises to the cytoplasm. The protein resides in the cytoskeleton. Its subcellular location is the cell projection. The protein localises to the nucleus. Its function is as follows. ATP-binding component of the Arp2/3 complex, a multiprotein complex that mediates actin polymerization upon stimulation by nucleation-promoting factor (NPF). The Arp2/3 complex mediates the formation of branched actin networks in the cytoplasm, providing the force for cell motility. Seems to contact the pointed end of the daughter actin filament. In addition to its role in the cytoplasmic cytoskeleton, the Arp2/3 complex also promotes actin polymerization in the nucleus, thereby regulating gene transcription and repair of damaged DNA. The Arp2/3 complex promotes homologous recombination (HR) repair in response to DNA damage by promoting nuclear actin polymerization, leading to drive motility of double-strand breaks (DSBs). This is Actin-related protein 3 (ACTR3) from Gallus gallus (Chicken).